A 405-amino-acid chain; its full sequence is Homocitrate synthase AksA (405 aa).

In terms of domain architecture, Pyruvate carboxyltransferase spans 23–274; sequence IEICDVTLRD…IERYDTTKLN (252 aa).

This sequence belongs to the alpha-IPM synthase/homocitrate synthase family.

The catalysed reaction is acetyl-CoA + 2-oxoglutarate + H2O = (2R)-homocitrate + CoA + H(+). It catalyses the reaction 2-oxoadipate + acetyl-CoA + H2O = (R)-dihomocitrate + CoA + H(+). It carries out the reaction 2-oxoheptanedioate + acetyl-CoA + H2O = (R)-trihomocitrate + CoA + H(+). The protein operates within organic acid metabolism; 2-oxosuberate biosynthesis. Its function is as follows. Catalyzes the condensation of alpha-ketoglutarate and acetyl-CoA to form (R)-homocitrate. Can also catalyze the condensation of alpha-ketoadipate with acetyl-CoA to form (R)-homo(2)citrate, and the condensation of alpha-ketopimelate with acetyl-CoA to form (R)-homo(3)citrate. These reactions are part of the biosynthesis pathway of coenzyme B and biotin. This is Homocitrate synthase AksA (aksA) from Methanosarcina mazei (strain ATCC BAA-159 / DSM 3647 / Goe1 / Go1 / JCM 11833 / OCM 88) (Methanosarcina frisia).